Consider the following 299-residue polypeptide: Prolyl 4-hydroxylase 2 (299 aa).

The Cytoplasmic portion of the chain corresponds to 1-5 (MSMSR). Residues 6 to 26 (LGLLLFVAILLVLLQSSTCLI) form a helical; Signal-anchor for type II membrane protein membrane-spanning segment. Residues 27–299 (SSPSSIINPS…GNCRRSCKAC (273 aa)) are Lumenal-facing. In terms of domain architecture, Fe2OG dioxygenase spans 121–246 (NGEDLQVLRY…KWSATKWIHV (126 aa)). Positions 139 and 141 each coordinate Fe cation. A glycan (N-linked (GlcNAc...) asparagine) is linked at N165. H227 provides a ligand contact to Fe cation. A 2-oxoglutarate-binding site is contributed by K237. N-linked (GlcNAc...) asparagine glycans are attached at residues N258 and N263. The ShKT domain occupies 259–299 (CTDVNESCERWAVLGECGKNPEYMVGTPEIPGNCRRSCKAC). Intrachain disulfides connect C259–C299, C266–C292, and C275–C296.

This sequence belongs to the P4HA family. It depends on Fe(2+) as a cofactor. The cofactor is L-ascorbate. As to expression, expressed in epidermal root hair cells (trichoblasts).

The protein resides in the endoplasmic reticulum membrane. It localises to the golgi apparatus membrane. The enzyme catalyses L-prolyl-[collagen] + 2-oxoglutarate + O2 = trans-4-hydroxy-L-prolyl-[collagen] + succinate + CO2. In terms of biological role, catalyzes the post-translational formation of 4-hydroxyproline in -Xaa-Pro-Gly- sequences in proline-rich peptide sequences of plant glycoproteins and other proteins. Hydroxyprolines are important constituent of many plant cell wall glycoproteins such as extensins, hydroxyproline-rich glycoproteins, lectins and arabinogalactan proteins. Possesses high affinity for leucine-rich repeat and proline-rich extensins of root cell walls that are essential for root hair development. Hydroxyprolines define the subsequent O-glycosylation sites by arabinosyltransferases which elongate the O-arabinosides on extensins. Has low affinity for the substrates tested in vitro. This chain is Prolyl 4-hydroxylase 2, found in Arabidopsis thaliana (Mouse-ear cress).